The sequence spans 388 residues: Succinate--CoA ligase [ADP-forming] subunit beta (388 aa).

The ATP-grasp domain maps to 9 to 244 (KQLFARSGLP…QSQEDPREAQ (236 aa)). ATP-binding positions include Lys-46, 53–55 (GRG), Glu-99, Thr-102, and Glu-107. Residues Asn-199 and Asp-213 each contribute to the Mg(2+) site. Residues Asn-264 and 321–323 (GIV) contribute to the substrate site.

This sequence belongs to the succinate/malate CoA ligase beta subunit family. As to quaternary structure, heterotetramer of two alpha and two beta subunits. It depends on Mg(2+) as a cofactor.

It catalyses the reaction succinate + ATP + CoA = succinyl-CoA + ADP + phosphate. It carries out the reaction GTP + succinate + CoA = succinyl-CoA + GDP + phosphate. It participates in carbohydrate metabolism; tricarboxylic acid cycle; succinate from succinyl-CoA (ligase route): step 1/1. Succinyl-CoA synthetase functions in the citric acid cycle (TCA), coupling the hydrolysis of succinyl-CoA to the synthesis of either ATP or GTP and thus represents the only step of substrate-level phosphorylation in the TCA. The beta subunit provides nucleotide specificity of the enzyme and binds the substrate succinate, while the binding sites for coenzyme A and phosphate are found in the alpha subunit. This Cronobacter sakazakii (strain ATCC BAA-894) (Enterobacter sakazakii) protein is Succinate--CoA ligase [ADP-forming] subunit beta.